Here is a 921-residue protein sequence, read N- to C-terminus: DNA mismatch repair protein MutS 1 (921 aa).

Residue 619–626 coordinates ATP; sequence GPNMSGKS. The disordered stretch occupies residues 837 to 887; it reads FRDGAAQSGGAAAGSTAEPVATDGDPEHAPGEAAAEGPKGDERAASLDSET. The segment covering 840–853 has biased composition (low complexity); it reads GAAQSGGAAAGSTA.

Belongs to the DNA mismatch repair MutS family.

Functionally, this protein is involved in the repair of mismatches in DNA. It is possible that it carries out the mismatch recognition step. This protein has a weak ATPase activity. In Haloarcula marismortui (strain ATCC 43049 / DSM 3752 / JCM 8966 / VKM B-1809) (Halobacterium marismortui), this protein is DNA mismatch repair protein MutS 1.